The primary structure comprises 246 residues: Mast cell protease 4 (246 aa).

The first 18 residues, 1-18, serve as a signal peptide directing secretion; it reads MQALLFLMALLLPSGAGA. Residues 19-20 constitute a propeptide, activation peptide; sequence EE. The Peptidase S1 domain occupies 21-244; that stretch reads IIGGVESRPH…YVPWINRVIK (224 aa). Cys-50 and Cys-66 are oxidised to a cystine. Active-site charge relay system residues include His-65 and Asp-109. Intrachain disulfides connect Cys-143–Cys-208 and Cys-174–Cys-187. Ser-202 serves as the catalytic Charge relay system.

Belongs to the peptidase S1 family. Granzyme subfamily. As to quaternary structure, monomer. Interacts with iripin-2, a serine protease inhibitor from Ixodes ricinus saliva. In terms of tissue distribution, submucosal mast cells. In femoral muscle, detected in myocytes but not in mast cells.

With respect to regulation, completely inhibited by serine protease inhibitors such as chymostatin, diisopropylfluorophosphate and phenylmethylsulfonyl fluoride, but not by p-tosyl-L-phenylalanine chloromethyl ketone, p-tosyl-L-lysine chloromethyl ketone, pepstatin, E-64, EDTA or o-phenanthroline. Also inhibited by lima bean trypsin inhibitor, soy bean trypsin inhibitor and human plasma alpha1-antichymotrypsin. In terms of biological role, has chymotrypsin-like activity. Hydrolyzes the amide bonds of synthetic substrates having Tyr and Phe residues at the P1 position. Preferentially hydrolyzes the 'Tyr-4-|-Ile-5' bond of angiotensin I and the 'Phe-20-|-Ala-21' bond of amyloid beta-protein, and is less active towards the 'Phe-8-|-His-9' bond of angiotensin I and the 'Phe-4-|-Ala-5' and 'Tyr-10-|-Glu-11' bonds of amyloid beta-protein. Involved in thrombin regulation and fibronectin processing. The sequence is that of Mast cell protease 4 (Mcpt4) from Mus musculus (Mouse).